Here is a 274-residue protein sequence, read N- to C-terminus: Undecaprenyl-diphosphatase (274 aa).

The next 7 membrane-spanning stretches (helical) occupy residues Ile-4–Ile-24, Leu-46–Tyr-63, Lys-82–Gly-102, Leu-109–Ala-129, Ala-184–Leu-204, Met-218–Leu-238, and Phe-249–Val-269.

Belongs to the UppP family.

It is found in the cell inner membrane. The catalysed reaction is di-trans,octa-cis-undecaprenyl diphosphate + H2O = di-trans,octa-cis-undecaprenyl phosphate + phosphate + H(+). Functionally, catalyzes the dephosphorylation of undecaprenyl diphosphate (UPP). Confers resistance to bacitracin. This chain is Undecaprenyl-diphosphatase, found in Dechloromonas aromatica (strain RCB).